The sequence spans 173 residues: Crossover junction endodeoxyribonuclease RuvC (173 aa).

Active-site residues include aspartate 8, glutamate 67, and aspartate 139. Mg(2+) is bound by residues aspartate 8, glutamate 67, and aspartate 139.

It belongs to the RuvC family. As to quaternary structure, homodimer which binds Holliday junction (HJ) DNA. The HJ becomes 2-fold symmetrical on binding to RuvC with unstacked arms; it has a different conformation from HJ DNA in complex with RuvA. In the full resolvosome a probable DNA-RuvA(4)-RuvB(12)-RuvC(2) complex forms which resolves the HJ. It depends on Mg(2+) as a cofactor.

It is found in the cytoplasm. It carries out the reaction Endonucleolytic cleavage at a junction such as a reciprocal single-stranded crossover between two homologous DNA duplexes (Holliday junction).. Functionally, the RuvA-RuvB-RuvC complex processes Holliday junction (HJ) DNA during genetic recombination and DNA repair. Endonuclease that resolves HJ intermediates. Cleaves cruciform DNA by making single-stranded nicks across the HJ at symmetrical positions within the homologous arms, yielding a 5'-phosphate and a 3'-hydroxyl group; requires a central core of homology in the junction. The consensus cleavage sequence is 5'-(A/T)TT(C/G)-3'. Cleavage occurs on the 3'-side of the TT dinucleotide at the point of strand exchange. HJ branch migration catalyzed by RuvA-RuvB allows RuvC to scan DNA until it finds its consensus sequence, where it cleaves and resolves the cruciform DNA. The polypeptide is Crossover junction endodeoxyribonuclease RuvC (Vibrio campbellii (strain ATCC BAA-1116)).